We begin with the raw amino-acid sequence, 466 residues long: MDNENNKNTKNSQQDSSFSEGGIRELLDRLALRSLIEKEEAAAPPKTYEDFKFWKTQPVPKFDDECTQEGPIDPNTDINQVPREPYRLLKEFEWATIDVTNDNELSEVHELLTENYVEDATAMLRFAYISEFLRWALMPPGYVKEWHVGVRVKSSRKLVAFISAVPLSIRVRDKIIKKCAEVNFLCIHKKLRSKRLTPLLIKEVTRRCHLENVWQAVYTAGVLLPSPVSLSRYMHRSLNWKKLYDIGFAPFPLGSTEKKETAKYHLPPNTQTPGLRPMELKDVPAVQSLLSQYMERFELAHLFSEEEVRHWFLYTDKVSSGPVVWSYVVENPESKKITDFFSFYSLPSTVIGNPKYKDIQAAYLYYYASDSCPKDLSSESQLAFVERCKLIVNDALILAKKFHFDVFNAVTVLDNNLFLKDLKFGEGDGFLNYYIYNYNCPKIPGGIDASKSVDYSRPSGMGFVMI.

The tract at residues 1-21 is disordered; that stretch reads MDNENNKNTKNSQQDSSFSEG. Residues 8–19 show a composition bias toward polar residues; it reads NTKNSQQDSSFS. Phosphoserine is present on Ser-17. Tetradecanoyl-CoA-binding positions include 51–54, 185–187, and 193–197; these read FKFW, LCI, and SKRLT. The Proton acceptor; via carboxylate role is filled by Ile-466.

This sequence belongs to the NMT family. In terms of assembly, monomer.

The protein resides in the cytoplasm. The catalysed reaction is N-terminal glycyl-[protein] + tetradecanoyl-CoA = N-tetradecanoylglycyl-[protein] + CoA + H(+). Adds a myristoyl group to the N-terminal glycine residue of certain cellular proteins. This Schizosaccharomyces pombe (strain 972 / ATCC 24843) (Fission yeast) protein is Glycylpeptide N-tetradecanoyltransferase (nmt1).